The chain runs to 502 residues: Cytochrome P450 2J2 (502 aa).

Cys448 serves as a coordination point for heme.

Belongs to the cytochrome P450 family. The cofactor is heme. As to expression, highly expressed in heart, present at lower levels in liver, kidney and skeletal muscle (at protein level).

The protein localises to the endoplasmic reticulum membrane. It is found in the microsome membrane. The enzyme catalyses (5Z,8Z,11Z,14Z)-eicosatetraenoate + reduced [NADPH--hemoprotein reductase] + O2 = 5,6-epoxy-(8Z,11Z,14Z)-eicosatrienoate + oxidized [NADPH--hemoprotein reductase] + H2O + H(+). It catalyses the reaction (5Z,8Z,11Z,14Z)-eicosatetraenoate + reduced [NADPH--hemoprotein reductase] + O2 = (8R,9S)-epoxy-(5Z,11Z,14Z)-eicosatrienoate + oxidized [NADPH--hemoprotein reductase] + H2O + H(+). It carries out the reaction (5Z,8Z,11Z,14Z)-eicosatetraenoate + reduced [NADPH--hemoprotein reductase] + O2 = (8S,9R)-epoxy-(5Z,11Z,14Z)-eicosatrienoate + oxidized [NADPH--hemoprotein reductase] + H2O + H(+). The catalysed reaction is (5Z,8Z,11Z,14Z)-eicosatetraenoate + reduced [NADPH--hemoprotein reductase] + O2 = (11R,12S)-epoxy-(5Z,8Z,14Z)-eicosatrienoate + oxidized [NADPH--hemoprotein reductase] + H2O + H(+). The enzyme catalyses (5Z,8Z,11Z,14Z)-eicosatetraenoate + reduced [NADPH--hemoprotein reductase] + O2 = (11S,12R)-epoxy-(5Z,8Z,14Z)-eicosatrienoate + oxidized [NADPH--hemoprotein reductase] + H2O + H(+). It catalyses the reaction (5Z,8Z,11Z,14Z)-eicosatetraenoate + reduced [NADPH--hemoprotein reductase] + O2 = (14R,15S)-epoxy-(5Z,8Z,11Z)-eicosatrienoate + oxidized [NADPH--hemoprotein reductase] + H2O + H(+). It carries out the reaction (5Z,8Z,11Z,14Z)-eicosatetraenoate + reduced [NADPH--hemoprotein reductase] + O2 = (14S,15R)-epoxy-(5Z,8Z,11Z)-eicosatrienoate + oxidized [NADPH--hemoprotein reductase] + H2O + H(+). The catalysed reaction is (15S)-hydroperoxy-(5Z,8Z,11Z,13E)-eicosatetraenoate = (13S)-hydroxy-(14S,15S)-epoxy-(5Z,8Z,11Z)-eicosatrienoate. The enzyme catalyses (15S)-hydroperoxy-(5Z,8Z,11Z,13E)-eicosatetraenoate = (13R)-hydroxy-(14S,15S)-epoxy-(5Z,8Z,11Z)-eicosatrienoate. It catalyses the reaction (5Z,8Z,11Z,14Z,17Z)-eicosapentaenoate + reduced [NADPH--hemoprotein reductase] + O2 = (17R,18S)-epoxy-(5Z,8Z,11Z,14Z)-eicosatetraenoate + oxidized [NADPH--hemoprotein reductase] + H2O + H(+). It carries out the reaction (5Z,8Z,11Z,14Z,17Z)-eicosapentaenoate + reduced [NADPH--hemoprotein reductase] + O2 = (17S,18R)-epoxy-(5Z,8Z,11Z,14Z)-eicosatetraenoate + oxidized [NADPH--hemoprotein reductase] + H2O + H(+). The catalysed reaction is (4Z,7Z,10Z,13Z,16Z,19Z)-docosahexaenoate + reduced [NADPH--hemoprotein reductase] + O2 = (19R,20S)-epoxy-(4Z,7Z,10Z,13Z,16Z)-docosapentaenoate + oxidized [NADPH--hemoprotein reductase] + H2O + H(+). The enzyme catalyses (4Z,7Z,10Z,13Z,16Z,19Z)-docosahexaenoate + reduced [NADPH--hemoprotein reductase] + O2 = (19S,20R)-epoxy-(4Z,7Z,10Z,13Z,16Z)-docosapentaenoate + oxidized [NADPH--hemoprotein reductase] + H2O + H(+). It catalyses the reaction albendazole + reduced [NADPH--hemoprotein reductase] + O2 = hydroxyalbendazole + oxidized [NADPH--hemoprotein reductase] + H2O + H(+). It carries out the reaction albendazole + reduced [NADPH--hemoprotein reductase] + O2 = albendazole S-oxide + oxidized [NADPH--hemoprotein reductase] + H2O + H(+). The catalysed reaction is fenbendazole + reduced [NADPH--hemoprotein reductase] + O2 = fenbendazole S-oxide + oxidized [NADPH--hemoprotein reductase] + H2O + H(+). It participates in lipid metabolism; arachidonate metabolism. A cytochrome P450 monooxygenase involved in the metabolism of polyunsaturated fatty acids (PUFA) in the cardiovascular system. Mechanistically, uses molecular oxygen inserting one oxygen atom into a substrate, and reducing the second into a water molecule, with two electrons provided by NADPH via cytochrome P450 reductase (NADPH--hemoprotein reductase). Catalyzes the epoxidation of double bonds of PUFA. Converts arachidonic acid to four regioisomeric epoxyeicosatrienoic acids (EpETrE), likely playing a major role in the epoxidation of endogenous cardiac arachidonic acid pools. In endothelial cells, participates in eicosanoids metabolism by converting hydroperoxide species into hydroxy epoxy metabolites. In combination with 15-lipoxygenase metabolizes arachidonic acid and converts hydroperoxyicosatetraenoates (HpETEs) into hydroxy epoxy eicosatrienoates (HEETs), which are precursors of vasodilatory trihydroxyicosatrienoic acids (THETAs). This hydroperoxide isomerase activity is NADPH- and O2-independent. Catalyzes the monooxygenation of a various xenobiotics, such as danazol, amiodarone, terfenadine, astemizole, thioridazine, tamoxifen, cyclosporin A and nabumetone. Catalyzes hydroxylation of the anthelmintics albendazole and fenbendazole. Catalyzes the sulfoxidation of fenbedazole. This Homo sapiens (Human) protein is Cytochrome P450 2J2.